The chain runs to 406 residues: Bifunctional enzyme IspD/IspF (406 aa).

The 2-C-methyl-D-erythritol 4-phosphate cytidylyltransferase stretch occupies residues M1–V246. The tract at residues R247 to P406 is 2-C-methyl-D-erythritol 2,4-cyclodiphosphate synthase. A divalent metal cation is bound by residues D253 and H255. 4-CDP-2-C-methyl-D-erythritol 2-phosphate-binding positions include D253–H255 and H279–S280. Residue H287 coordinates a divalent metal cation. 4-CDP-2-C-methyl-D-erythritol 2-phosphate is bound by residues D301 to G303, T377 to E380, F384, and R387.

This sequence in the N-terminal section; belongs to the IspD/TarI cytidylyltransferase family. IspD subfamily. It in the C-terminal section; belongs to the IspF family. The cofactor is a divalent metal cation.

It carries out the reaction 2-C-methyl-D-erythritol 4-phosphate + CTP + H(+) = 4-CDP-2-C-methyl-D-erythritol + diphosphate. It catalyses the reaction 4-CDP-2-C-methyl-D-erythritol 2-phosphate = 2-C-methyl-D-erythritol 2,4-cyclic diphosphate + CMP. Its pathway is isoprenoid biosynthesis; isopentenyl diphosphate biosynthesis via DXP pathway; isopentenyl diphosphate from 1-deoxy-D-xylulose 5-phosphate: step 2/6. It functions in the pathway isoprenoid biosynthesis; isopentenyl diphosphate biosynthesis via DXP pathway; isopentenyl diphosphate from 1-deoxy-D-xylulose 5-phosphate: step 4/6. Functionally, bifunctional enzyme that catalyzes the formation of 4-diphosphocytidyl-2-C-methyl-D-erythritol from CTP and 2-C-methyl-D-erythritol 4-phosphate (MEP) (IspD), and catalyzes the conversion of 4-diphosphocytidyl-2-C-methyl-D-erythritol 2-phosphate (CDP-ME2P) to 2-C-methyl-D-erythritol 2,4-cyclodiphosphate (ME-CPP) with a corresponding release of cytidine 5-monophosphate (CMP) (IspF). The polypeptide is Bifunctional enzyme IspD/IspF (Rhizobium rhizogenes (strain K84 / ATCC BAA-868) (Agrobacterium radiobacter)).